We begin with the raw amino-acid sequence, 91 residues long: Small ribosomal subunit protein uS19 (91 aa).

The protein belongs to the universal ribosomal protein uS19 family.

Functionally, protein S19 forms a complex with S13 that binds strongly to the 16S ribosomal RNA. This is Small ribosomal subunit protein uS19 from Ectopseudomonas mendocina (strain ymp) (Pseudomonas mendocina).